The sequence spans 246 residues: Orotidine 5'-phosphate decarboxylase (246 aa).

Residues Asp18, Lys39, 66-75, Thr130, Arg192, Gln201, Gly221, and Arg222 contribute to the substrate site; that span reads DLKFHDIPAT. The active-site Proton donor is Lys68.

Belongs to the OMP decarboxylase family. Type 1 subfamily. Homodimer.

The catalysed reaction is orotidine 5'-phosphate + H(+) = UMP + CO2. Its pathway is pyrimidine metabolism; UMP biosynthesis via de novo pathway; UMP from orotate: step 2/2. Catalyzes the decarboxylation of orotidine 5'-monophosphate (OMP) to uridine 5'-monophosphate (UMP). In Parasynechococcus marenigrum (strain WH8102), this protein is Orotidine 5'-phosphate decarboxylase.